Consider the following 444-residue polypeptide: Transcription activator AKTR-3 (444 aa).

Residues 16–43 constitute a DNA-binding region (zn(2)-C6 fungal-type); sequence CDFCTQSKLRCNKNKPSCRRCTIQQQPC. The tract at residues 49–89 is disordered; it reads RRTGRPPKHPRTANDCQEANGQHGEQDPVTSTPGGSCQQQS. Over residues 50–59 the composition is skewed to basic residues; sequence RTGRPPKHPR. The span at 76 to 89 shows a compositional bias: polar residues; the sequence is PVTSTPGGSCQQQS.

Its subcellular location is the nucleus. Functionally, transcription factor that regulates the expression of the gene clusters that mediate the biosynthesis of the host-selective toxins (HSTs) AK-toxins responsible for Japanese pear black spot disease by the Japanese pear pathotype. AK-toxins are esters of 9,10-epoxy 8-hydroxy 9-methyldecatrienoic acid (EDA). On cellular level, AK-toxins affect plasma membrane of susceptible cells and cause a sudden increase in loss of K(+) after a few minutes of toxin treatment. This is Transcription activator AKTR-3 from Alternaria alternata (Alternaria rot fungus).